Consider the following 172-residue polypeptide: 3-hydroxydecanoyl-[acyl-carrier-protein] dehydratase (172 aa).

His71 is a catalytic residue.

The protein belongs to the thioester dehydratase family. FabA subfamily. Homodimer.

Its subcellular location is the cytoplasm. The enzyme catalyses a (3R)-hydroxyacyl-[ACP] = a (2E)-enoyl-[ACP] + H2O. It catalyses the reaction (3R)-hydroxydecanoyl-[ACP] = (2E)-decenoyl-[ACP] + H2O. The catalysed reaction is (2E)-decenoyl-[ACP] = (3Z)-decenoyl-[ACP]. It participates in lipid metabolism; fatty acid biosynthesis. Necessary for the introduction of cis unsaturation into fatty acids. Catalyzes the dehydration of (3R)-3-hydroxydecanoyl-ACP to E-(2)-decenoyl-ACP and then its isomerization to Z-(3)-decenoyl-ACP. Can catalyze the dehydratase reaction for beta-hydroxyacyl-ACPs with saturated chain lengths up to 16:0, being most active on intermediate chain length. The chain is 3-hydroxydecanoyl-[acyl-carrier-protein] dehydratase from Salmonella agona (strain SL483).